The chain runs to 79 residues: MENLNIDMLYIAAAIMMGLSAIGAAVGIGILGSKFLEGAARQPDLVPLLRTQFFIVMGLVDAIPMITVGLSLYVMFAVV.

The next 2 helical transmembrane spans lie at 11 to 31 (IAAA…IGIL) and 53 to 73 (FFIV…LSLY).

It belongs to the ATPase C chain family. F-type ATPases have 2 components, F(1) - the catalytic core - and F(0) - the membrane proton channel. F(1) has five subunits: alpha(3), beta(3), gamma(1), delta(1), epsilon(1). F(0) has three main subunits: a(1), b(2) and c(10-14). The alpha and beta chains form an alternating ring which encloses part of the gamma chain. F(1) is attached to F(0) by a central stalk formed by the gamma and epsilon chains, while a peripheral stalk is formed by the delta and b chains.

The protein localises to the cell inner membrane. In terms of biological role, f(1)F(0) ATP synthase produces ATP from ADP in the presence of a proton or sodium gradient. F-type ATPases consist of two structural domains, F(1) containing the extramembraneous catalytic core and F(0) containing the membrane proton channel, linked together by a central stalk and a peripheral stalk. During catalysis, ATP synthesis in the catalytic domain of F(1) is coupled via a rotary mechanism of the central stalk subunits to proton translocation. Its function is as follows. Key component of the F(0) channel; it plays a direct role in translocation across the membrane. A homomeric c-ring of between 10-14 subunits forms the central stalk rotor element with the F(1) delta and epsilon subunits. This Blochmanniella floridana protein is ATP synthase subunit c.